The sequence spans 181 residues: Adenine phosphoribosyltransferase (181 aa).

The protein belongs to the purine/pyrimidine phosphoribosyltransferase family. In terms of assembly, homodimer.

The protein localises to the cytoplasm. The catalysed reaction is AMP + diphosphate = 5-phospho-alpha-D-ribose 1-diphosphate + adenine. It participates in purine metabolism; AMP biosynthesis via salvage pathway; AMP from adenine: step 1/1. Its function is as follows. Catalyzes a salvage reaction resulting in the formation of AMP, that is energically less costly than de novo synthesis. The chain is Adenine phosphoribosyltransferase from Brucella anthropi (strain ATCC 49188 / DSM 6882 / CCUG 24695 / JCM 21032 / LMG 3331 / NBRC 15819 / NCTC 12168 / Alc 37) (Ochrobactrum anthropi).